The primary structure comprises 506 residues: Maturase K (506 aa).

The protein belongs to the intron maturase 2 family. MatK subfamily.

The protein localises to the plastid. It is found in the chloroplast. Its function is as follows. Usually encoded in the trnK tRNA gene intron. Probably assists in splicing its own and other chloroplast group II introns. The protein is Maturase K of Sullivantia sullivantii (Sullivant's coolwort).